We begin with the raw amino-acid sequence, 296 residues long: Magnetosome protein MamB (296 aa).

Residues 1-12 (MKFENCRDCREE) lie on the Cytoplasmic side of the membrane. A transmembrane domain (TMD) region spans residues 1-214 (MKFENCRDCR…GLMDSSVDTE (214 aa)). The helical transmembrane segment at 13 to 33 (VVWWAFTADICMTLFKGVLGL) threads the bilayer. The Lumenal portion of the chain corresponds to 34–83 (MSGSVALVADSLHSGADVVASGVTQLSLKISNKPADERYPFGYGNIQYIS). Residues 84–104 (SSIVGSLLLIGASFLMYGSVM) traverse the membrane as a helical segment. The Cytoplasmic segment spans residues 105 to 112 (KLISGTYE). A helical transmembrane segment spans residues 113 to 133 (APSIFAAVGASVTVIVNELMY). Residues 134-164 (RYQICVGNENNSPAIIANAWDNRSDAISSAA) are Lumenal-facing. Residues 165 to 185 (VMVGVIASVIGFPIADTIAAI) traverse the membrane as a helical segment. At 186 to 296 (GVSALVGRIG…SPAPAAAARA (111 aa)) the chain is on the cytoplasmic side. The interval 215–296 (LLQTAWQVAM…SPAPAAAARA (82 aa)) is C-terminal domain (CTD).

Belongs to the cation diffusion facilitator (CDF) transporter (TC 2.A.4) family. Forms heterodimers with MamM. Probably interacts with MamE.

The protein resides in the magnetosome membrane. Functionally, plays a dual, essential role in magnetosome formation; required for magnetosome vesicle formation as well as biomineralization. Probably binds and transports iron. Requires heterodimerization with MamM for stability. In Paramagnetospirillum magneticum (strain ATCC 700264 / AMB-1) (Magnetospirillum magneticum), this protein is Magnetosome protein MamB (mamB).